Consider the following 247-residue polypeptide: Triosephosphate isomerase (247 aa).

2 residues coordinate substrate: N10 and K12. The Electrophile role is filled by H94. E164 functions as the Proton acceptor in the catalytic mechanism.

It belongs to the triosephosphate isomerase family. Homodimer.

The enzyme catalyses D-glyceraldehyde 3-phosphate = dihydroxyacetone phosphate. It participates in carbohydrate biosynthesis; gluconeogenesis. The protein operates within carbohydrate degradation; glycolysis; D-glyceraldehyde 3-phosphate from glycerone phosphate: step 1/1. The polypeptide is Triosephosphate isomerase (Tpi) (Drosophila simulans (Fruit fly)).